The primary structure comprises 405 residues: Tryptophan synthase beta chain (405 aa).

The residue at position 96 (K96) is an N6-(pyridoxal phosphate)lysine.

Belongs to the TrpB family. In terms of assembly, tetramer of two alpha and two beta chains. Requires pyridoxal 5'-phosphate as cofactor.

It carries out the reaction (1S,2R)-1-C-(indol-3-yl)glycerol 3-phosphate + L-serine = D-glyceraldehyde 3-phosphate + L-tryptophan + H2O. The protein operates within amino-acid biosynthesis; L-tryptophan biosynthesis; L-tryptophan from chorismate: step 5/5. In terms of biological role, the beta subunit is responsible for the synthesis of L-tryptophan from indole and L-serine. This Clostridium botulinum (strain Alaska E43 / Type E3) protein is Tryptophan synthase beta chain.